Here is a 153-residue protein sequence, read N- to C-terminus: Partner of bursicon (153 aa).

Residues 1 to 35 (MCNSVRTALAASNCCSIVLCCVLLLTLTLTVAVTA) form the signal peptide. Intrachain disulfides connect C44-C102, C68-C117, C77-C143, C81-C145, and C99-C148. Positions 44-139 (CETLPSEIHL…SATMEIRLKE (96 aa)) constitute a CTCK domain.

As to quaternary structure, heterodimer of burs and pburs.

It localises to the secreted. Its function is as follows. Final heterodimeric neurohormone released at the end of the molting cycle, involved in the sclerotization (tanning) of the insect cuticle, melanization and wing spreading. This chain is Partner of bursicon, found in Anopheles gambiae (African malaria mosquito).